The primary structure comprises 1847 residues: Peripheral-type benzodiazepine receptor-associated protein 1 (1847 aa).

3 disordered regions span residues 57-81, 282-318, and 560-626; these read EESS…GTET, NQRE…EDDV, and SGPK…DTAS. Composition is skewed to low complexity over residues 294-310 and 600-613; these read GSTA…GAPG and SLSN…IHNS. The SH3 1 domain maps to 651-718; the sequence is ARIQVFLARY…PSNFVERVSD (68 aa). Residues 728–787 form a disordered region; the sequence is ELADSSHSSGPELSFLSGGGGGCSSGGQSSGGRSQPRPEEEATGDELSLSPPPEGLGEPL. A compositionally biased stretch (gly residues) spans 744–757; it reads SGGGGGCSSGGQSS. Fibronectin type-III domains are found at residues 789–880, 882–974, and 979–1077; these read VPYP…AGAG, VPSQ…TLPA, and APLD…PALA. 5 disordered regions span residues 1107–1174, 1191–1215, 1240–1307, 1322–1478, and 1514–1616; these read LGYT…EGPD, DAGP…VCHR, NSLV…ILEQ, FSIP…ESSL, and PTDG…SHQD. A compositionally biased stretch (polar residues) spans 1122-1133; it reads TQDSPASLSTEM. Over residues 1203–1215 the composition is skewed to basic and acidic residues; that stretch reads LTQKEPSTEVCHR. Residues 1253 to 1266 show a composition bias toward acidic residues; sequence DIQEEEEEEEEEEE. Residues 1272–1284 are compositionally biased toward polar residues; the sequence is WSFQKQVAGNSIG. Composition is skewed to acidic residues over residues 1296-1305 and 1325-1335; these read CETDSDEEIL and PEEEEEEDEEE. A compositionally biased stretch (low complexity) spans 1340–1352; it reads PGPSSSSQDPSQP. Basic and acidic residues-rich tracts occupy residues 1412–1421 and 1546–1578; these read RPQDPREHCS and AWEK…ESRG. The region spanning 1617–1685 is the SH3 2 domain; sequence LPLRVFVALF…PCNMVAEVAV (69 aa). Disordered regions lie at residues 1701 to 1747 and 1818 to 1847; these read PPNV…PGPP and LEGP…RVQC. An SH3 3 domain is found at 1756 to 1823; sequence KTSRPMVAAF…PSNFLEGPGP (68 aa).

Belongs to the RIMBP family. In terms of assembly, interacts with RIMS1 and RIMS2. Interacts with TSPO. Interacts with CACNA1A. Specifically expressed in brain. High expression level in the limbic system such as the nucleus accumbens, septum, and hippocampus, as well as on the cerebellum and pineal gland. Abundant in the CA1 region of the hippocampus.

It is found in the cytoplasm. The protein resides in the mitochondrion. Functionally, required for synaptic transmission regulation. It probably controls the recruitement of voltage-gated calcium channels to the presynaptic membrane, and modulates neurotransmitter release. The polypeptide is Peripheral-type benzodiazepine receptor-associated protein 1 (Rattus norvegicus (Rat)).